The chain runs to 272 residues: MLDQPIGVIDSGVGGLTVAKEIMRQLPKEKIIYVGDTKRCPYGPRKEEEVLQYTWEMAHYLLRHHHIKMLVIACNTATAIALDEIKATLDIPVIGVIQPGARTAIKVTNNQQIGVIGTANTIKSEAYKEALLSLKAGLAVQSLACPLLVPFVESGTFLDQTADEVVKDSLEPMKETGIDTLILGCTHYPILKESIQRFMGSDVSIISSGDETAREASTILSYKGLLNTSQEAPVHTFYTTGQQQNFENIARDWFGYLPGKVETVSLEHVYQQ.

Residues 10–11 and 42–43 each bind substrate; these read DS and YG. Residue Cys74 is the Proton donor/acceptor of the active site. 75–76 contributes to the substrate binding site; sequence NT. Cys185 serves as the catalytic Proton donor/acceptor. 186 to 187 contributes to the substrate binding site; that stretch reads TH.

Belongs to the aspartate/glutamate racemases family.

It carries out the reaction L-glutamate = D-glutamate. The protein operates within cell wall biogenesis; peptidoglycan biosynthesis. Its function is as follows. Provides the (R)-glutamate required for cell wall biosynthesis. The chain is Glutamate racemase from Bacillus pumilus (strain SAFR-032).